The primary structure comprises 734 residues: Photosystem I P700 chlorophyll a apoprotein A2 (734 aa).

8 helical membrane passes run 46–69 (IFASHFGQLAIIFLWTSGNLFHVA), 135–158 (LYTGALFLLFLSALSLIGGWLHLQ), 175–199 (LNHHLSGLFGVSSLAWTGHLVHVAI), 273–291 (MAHHHLAIAILFLIAGHMY), 330–353 (IHFQLGLALASLGVITSLVAQHMY), 369–395 (AALYTHHQYIAGFIMTGAFAHGAIFFI), 417–439 (AIISHLSWASLFLGFHTLGLYVH), and 517–535 (FLVHHAIALGLHTTTLILV). C559 and C568 together coordinate [4Fe-4S] cluster. 2 helical membrane-spanning segments follow: residues 575 to 596 (AFYLAVFWMLNTIGWVTFYWHW) and 643 to 665 (LSVWAWMFLFGHLVWATGFMFLI). Chlorophyll a-binding residues include H654, M662, and Y670. Residue W671 coordinates phylloquinone. The chain crosses the membrane as a helical span at residues 707–727 (LVGLAHFSVGYIFTYAAFLIA).

Belongs to the PsaA/PsaB family. As to quaternary structure, the PsaA/B heterodimer binds the P700 chlorophyll special pair and subsequent electron acceptors. PSI consists of a core antenna complex that captures photons, and an electron transfer chain that converts photonic excitation into a charge separation. The eukaryotic PSI reaction center is composed of at least 11 subunits. P700 is a chlorophyll a/chlorophyll a' dimer, A0 is one or more chlorophyll a, A1 is one or both phylloquinones and FX is a shared 4Fe-4S iron-sulfur center. serves as cofactor.

It is found in the plastid. It localises to the chloroplast thylakoid membrane. The enzyme catalyses reduced [plastocyanin] + hnu + oxidized [2Fe-2S]-[ferredoxin] = oxidized [plastocyanin] + reduced [2Fe-2S]-[ferredoxin]. PsaA and PsaB bind P700, the primary electron donor of photosystem I (PSI), as well as the electron acceptors A0, A1 and FX. PSI is a plastocyanin-ferredoxin oxidoreductase, converting photonic excitation into a charge separation, which transfers an electron from the donor P700 chlorophyll pair to the spectroscopically characterized acceptors A0, A1, FX, FA and FB in turn. Oxidized P700 is reduced on the lumenal side of the thylakoid membrane by plastocyanin. This is Photosystem I P700 chlorophyll a apoprotein A2 from Crucihimalaya wallichii (Rock-cress).